The following is a 301-amino-acid chain: Putative S-adenosyl-L-methionine-dependent methyltransferase BCG_0775c (301 aa).

Residues Asp-130 and Asp-159–Leu-160 contribute to the S-adenosyl-L-methionine site.

The protein belongs to the UPF0677 family.

In terms of biological role, exhibits S-adenosyl-L-methionine-dependent methyltransferase activity. The chain is Putative S-adenosyl-L-methionine-dependent methyltransferase BCG_0775c from Mycobacterium bovis (strain BCG / Pasteur 1173P2).